An 832-amino-acid chain; its full sequence is AP-1 complex subunit gamma-1 (832 aa).

The GAE domain occupies 733 to 832 (LNVYASLLSA…QFDHKFDETL (100 aa)).

Adapter protein complex 1 (AP-1) is a heterotetramer composed of two large adaptins (gamma-type subunit APL4 and beta-type subunit APL2), a medium adaptin (mu-type subunit APM1) and a small adaptin (sigma-type subunit APS1). AP-1 interacts with clathrin. Also a component of the AP-1R complex composed of at least APM2, APL4 and APS1.

The protein localises to the cytoplasm. The protein resides in the golgi apparatus membrane. Its subcellular location is the cytoplasmic vesicle. It localises to the clathrin-coated vesicle membrane. In terms of biological role, adaptins are components of the adapter complexes which link clathrin to receptors in coated vesicles. Clathrin-associated protein complexes are believed to interact with the cytoplasmic tails of membrane proteins, leading to their selection and concentration. The AP-1 complex interacts directly with clathrin. Component of the AP-1-related (AP-1R) complex, an adapter protein complex that mediates sorting of cargo SNARE SNC1. In contrast to the APM1-containing AP-1 complex, AP-1R is incapable of sorting CHS3. In Saccharomyces cerevisiae (strain ATCC 204508 / S288c) (Baker's yeast), this protein is AP-1 complex subunit gamma-1 (APL4).